A 261-amino-acid polypeptide reads, in one-letter code: Na(+)-translocating NADH-quinone reductase subunit C (261 aa).

Residues 11–31 form a helical membrane-spanning segment; it reads LLVALVVCLVSSVFVAGAAVA. The residue at position 230 (Thr230) is an FMN phosphoryl threonine.

The protein belongs to the NqrC family. Composed of six subunits; NqrA, NqrB, NqrC, NqrD, NqrE and NqrF. FMN serves as cofactor.

The protein localises to the cell inner membrane. It carries out the reaction a ubiquinone + n Na(+)(in) + NADH + H(+) = a ubiquinol + n Na(+)(out) + NAD(+). In terms of biological role, NQR complex catalyzes the reduction of ubiquinone-1 to ubiquinol by two successive reactions, coupled with the transport of Na(+) ions from the cytoplasm to the periplasm. NqrA to NqrE are probably involved in the second step, the conversion of ubisemiquinone to ubiquinol. The protein is Na(+)-translocating NADH-quinone reductase subunit C of Pseudomonas aeruginosa (strain ATCC 15692 / DSM 22644 / CIP 104116 / JCM 14847 / LMG 12228 / 1C / PRS 101 / PAO1).